The sequence spans 352 residues: C-C chemokine receptor type 5 (352 aa).

Residues 1 to 30 lie on the Extracellular side of the membrane; the sequence is MDYQVSSPTYDIDYYTSEPCQKVNVKQIAA. Tyr3 carries the post-translational modification Sulfotyrosine. O-linked (GalNAc...) serine glycans are attached at residues Ser6 and Ser7. Sulfotyrosine occurs at positions 10, 14, and 15. Cystine bridges form between Cys20–Cys269 and Cys101–Cys178. The helical transmembrane segment at 31-58 threads the bilayer; that stretch reads RLLPPLYSLVFIFGFVGNILVVLILINC. Residues 59 to 68 lie on the Cytoplasmic side of the membrane; it reads KRLKSMTDIY. The chain crosses the membrane as a helical span at residues 69–89; the sequence is LLNLAISDLFFLLTVPFWAHY. The Extracellular portion of the chain corresponds to 90–102; sequence AAAQWDFGNTMCQ. A helical membrane pass occupies residues 103 to 124; it reads LLTGLYFIGFFSGIFFIILLTI. Residues 125-141 lie on the Cytoplasmic side of the membrane; sequence DRYLAIVHAVFALKART. A helical membrane pass occupies residues 142–166; it reads VTFGVVTSVITWVVAVFASLPGIIF. The Extracellular segment spans residues 167–198; that stretch reads TRSQREGLHYTCSSHFPYSQYQFWKNFQTLKI. Residues 199-218 form a helical membrane-spanning segment; it reads VILGLVLPLLVMVICYSGIL. At 219–235 the chain is on the cytoplasmic side; the sequence is KTLLRCRNEKKRHRAVR. A helical membrane pass occupies residues 236–260; sequence LIFTIMIVYFLFWAPYNIVLLLNTF. Over 261 to 277 the chain is Extracellular; sequence QEFFGLNNCSSSNRLDQ. Residues 278-301 form a helical membrane-spanning segment; the sequence is AMQVTETLGMTHCCINPIIYAFVG. Topologically, residues 302–352 are cytoplasmic; the sequence is EKFRNYLLVFFQKHIAKRFCKCCYIFQQEAPERASSVYTRSTGEQEISVGL. Residues Cys321, Cys323, and Cys324 are each lipidated (S-palmitoyl cysteine). Residues Ser336, Ser337, Ser342, and Ser349 each carry the phosphoserine; by BARK1 modification.

This sequence belongs to the G-protein coupled receptor 1 family. As to quaternary structure, interacts with PRAF2. Efficient ligand binding to CCL3/MIP-1alpha and CCL4/MIP-1beta requires sulfation, O-glycosylation and sialic acid modifications. Glycosylation on Ser-6 is required for efficient binding of CCL4. Interacts with GRK2. Interacts with ARRB1 and ARRB2. Interacts with CNIH4. Interacts with S100A4; this interaction stimulates T-lymphocyte chemotaxis. Post-translationally, sulfated on at least 2 of the N-terminal tyrosines. Sulfation is required for efficient binding of the chemokines, CCL3 and CCL4. Palmitoylation in the C-terminal is important for cell surface expression. In terms of processing, phosphorylation on serine residues in the C-terminal is stimulated by binding CC chemokines especially by APO-RANTES. Post-translationally, O-glycosylated, but not N-glycosylated. Ser-6 appears to be the major site even if Ser-7 may be also O-glycosylated. Also sialylated glycans present which contribute to chemokine binding. Thr-16 and Ser-17 may also be glycosylated and, if so, with small moieties such as a T-antigen.

It localises to the cell membrane. In terms of biological role, receptor for a number of inflammatory CC-chemokines including CCL3/MIP-1-alpha, CCL4/MIP-1-beta and RANTES and subsequently transduces a signal by increasing the intracellular calcium ion level. May play a role in the control of granulocytic lineage proliferation or differentiation. Participates in T-lymphocyte migration to the infection site by acting as a chemotactic receptor. The polypeptide is C-C chemokine receptor type 5 (CCR5) (Rhinopithecus bieti (Black snub-nosed monkey)).